Here is a 241-residue protein sequence, read N- to C-terminus: MORN repeat-containing protein 3 (241 aa).

Positions 6 to 35 (CPRKVEPPWKGWDRKAQKNGLRHQVFAVNG) are interaction with MDM2. MORN repeat units lie at residues 38–60 (YVGE…KSGA), 62–84 (YEGD…DPET), 91–113 (YSGW…PKEY), 114–136 (YEGE…NGDI), 137–159 (YEGQ…NGNR), 160–182 (YEGI…DHGQ), and 184–205 (FEGY…GRDE). The interaction with SIRT1 stretch occupies residues 76–100 (SLSHPDPETGKLRRVYSGWWKGDKK). The segment at 206–240 (APEPTQFPIPKVEILDPDGVLKEALDKLMKPEEEE) is interaction with TP53.

In terms of assembly, interacts with MEIG1. Interacts with TP53, MDM2 and SIRT1; the interactions mediate post-transcriptional modifications of TP53 by MDM2 and SIRT1. As to expression, expressed in testis (at protein level).

The protein localises to the cytoplasmic vesicle. Its subcellular location is the secretory vesicle. The protein resides in the acrosome. Assembles a suppression complex (suppresome) by tethering SIRT1 and MDM2 to regulate composite modifications of p53/TP53. Confers both deacetylation-mediated functional inactivation, by SIRT1, and ubiquitination-dependent degradation, by MDM2, of p53/TP53, promoting a proliferative and cell survival behaviors. May play a role in the regulation of spermatogenesis. The polypeptide is MORN repeat-containing protein 3 (Morn3) (Mus musculus (Mouse)).